A 958-amino-acid chain; its full sequence is Glucoamylase 1 (958 aa).

The first 22 residues, 1–22, serve as a signal peptide directing secretion; it reads MIFLKLIKSIVIGLGLVSAIQA. 6 N-linked (GlcNAc...) asparagine glycosylation sites follow: Asn61, Asn78, Asn107, Asn197, Asn403, and Asn416. Residues Asp470 and Glu473 contribute to the active site. Residues Asn513, Asn580, and Asn602 are each glycosylated (N-linked (GlcNAc...) asparagine). Residue Asp638 is the Proton donor of the active site. Asn813 and Asn907 each carry an N-linked (GlcNAc...) asparagine glycan.

Belongs to the glycosyl hydrolase 31 family.

It catalyses the reaction Hydrolysis of terminal (1-&gt;4)-linked alpha-D-glucose residues successively from non-reducing ends of the chains with release of beta-D-glucose.. Its function is as follows. This glucoamylase has a specificity toward both alpha-1,4 and alpha-1,6 linkages. In Schwanniomyces occidentalis (Yeast), this protein is Glucoamylase 1 (GAM1).